Reading from the N-terminus, the 718-residue chain is K(+)-insensitive pyrophosphate-energized proton pump (718 aa).

6 helical membrane passes run 6–26, 54–76, 81–103, 112–132, 133–153, and 168–188; these read AVLV…IWAI, LTRQ…WYLL, AIGF…HVSV, AASL…AITG, LLVA…LTVW, and VSLG…GGIF. Lys-190 is a substrate binding site. The Mg(2+) site is built by Asp-193, Asp-197, Asn-220, and Asp-223. Helical transmembrane passes span 240-260, 265-285, 300-320, 335-355, 385-405, and 413-433; these read AVTV…SDIL, LYPL…TFFV, GLIA…TLTV, GTNL…IVVI, GLAV…GGII, and LFGT…IVAL. Asp-441 contributes to the Mg(2+) binding site. The next 4 membrane-spanning stretches (helical) occupy residues 472–492, 524–544, 593–613, and 620–640; these read AVTK…LFAA, YVVA…GMAM, IIPS…VLLI, and AFAA…FVAI. Positions 650, 682, and 686 each coordinate Ca(2+). A substrate-binding site is contributed by Lys-689. A helical membrane pass occupies residues 695–715; that stretch reads AVNPAIKITNIVALLLLAVLA.

This sequence belongs to the H(+)-translocating pyrophosphatase (TC 3.A.10) family. K(+)-insensitive subfamily. Homodimer. It depends on Mg(2+) as a cofactor.

The protein resides in the cell inner membrane. It carries out the reaction diphosphate + H2O + H(+)(in) = 2 phosphate + 2 H(+)(out). In terms of biological role, proton pump that utilizes the energy of pyrophosphate hydrolysis as the driving force for proton movement across the membrane. Generates a proton motive force. In Brucella anthropi (strain ATCC 49188 / DSM 6882 / CCUG 24695 / JCM 21032 / LMG 3331 / NBRC 15819 / NCTC 12168 / Alc 37) (Ochrobactrum anthropi), this protein is K(+)-insensitive pyrophosphate-energized proton pump.